The chain runs to 100 residues: Small ribosomal subunit protein bS18c (100 aa).

Belongs to the bacterial ribosomal protein bS18 family. In terms of assembly, part of the 30S ribosomal subunit.

It localises to the plastid. It is found in the chloroplast. The sequence is that of Small ribosomal subunit protein bS18c from Pleurastrum terricola (Filamentous green alga).